Reading from the N-terminus, the 117-residue chain is Hemerythrin subunit beta (117 aa).

Fe cation contacts are provided by His24, His53, Glu57, His72, His76, His105, and Asp110.

This sequence belongs to the hemerythrin family. Octamer composed of two types of chains: alpha and beta.

In terms of biological role, hemerythrin is a respiratory protein in blood cells of certain marine worms. The oxygen-binding site in each chain contains two iron atoms. The polypeptide is Hemerythrin subunit beta (Lingula reevii (Inarticulated brachiopod)).